Here is a 261-residue protein sequence, read N- to C-terminus: Homeobox protein engrailed-2b (261 aa).

3 stretches are compositionally biased toward basic and acidic residues: residues 1–21 (MEEN…DESN), 53–72 (GRRK…RENR), and 100–116 (KKTD…RAET). 3 disordered regions span residues 1-24 (MEEN…NRAI), 53-125 (GRRK…SSDS), and 152-176 (DRPS…KRPR). Residues 172–231 (DKRPRTAFTAEQLQRLKNEFQNNRYLTEQRRQALAQELGLNESQIKIWFQNKRAKIKKAT) constitute a DNA-binding region (homeobox).

The protein belongs to the engrailed homeobox family.

It is found in the nucleus. This is Homeobox protein engrailed-2b (eng2b) from Danio rerio (Zebrafish).